The primary structure comprises 270 residues: Orotidine 5'-phosphate decarboxylase (270 aa).

Residues D41, 63 to 65, 95 to 104, Y221, and R239 each bind substrate; these read KTH and DRKFADIGNT. K97 (proton donor) is an active-site residue.

Belongs to the OMP decarboxylase family.

It catalyses the reaction orotidine 5'-phosphate + H(+) = UMP + CO2. The protein operates within pyrimidine metabolism; UMP biosynthesis via de novo pathway; UMP from orotate: step 2/2. The sequence is that of Orotidine 5'-phosphate decarboxylase (URA3) from Candida boidinii (Yeast).